Consider the following 175-residue polypeptide: Threonylcarbamoyl-AMP synthase (175 aa).

The YrdC-like domain occupies 1-175; it reads MLHNDDVIAY…IINGKLIRYV (175 aa).

Belongs to the SUA5 family. TsaC subfamily.

The protein localises to the cytoplasm. It carries out the reaction L-threonine + hydrogencarbonate + ATP = L-threonylcarbamoyladenylate + diphosphate + H2O. Its function is as follows. Required for the formation of a threonylcarbamoyl group on adenosine at position 37 (t(6)A37) in tRNAs that read codons beginning with adenine. Catalyzes the conversion of L-threonine, HCO(3)(-)/CO(2) and ATP to give threonylcarbamoyl-AMP (TC-AMP) as the acyladenylate intermediate, with the release of diphosphate. This chain is Threonylcarbamoyl-AMP synthase, found in Buchnera aphidicola subsp. Acyrthosiphon pisum (strain APS) (Acyrthosiphon pisum symbiotic bacterium).